The sequence spans 91 residues: Potassium channel toxin BmTXK-beta-2 (91 aa).

The first 19 residues, 1–19, serve as a signal peptide directing secretion; that stretch reads MQRNLVVLLFLGMVALSSC. Positions 20–27 are excised as a propeptide; sequence GLREKHFQ. The BetaSPN-type CS-alpha/beta domain occupies 54–91; the sequence is QFGCPAYQGYCDDHCQDIKKEEGFCHGFKCKCGIPMGF. Disulfide bonds link Cys57/Cys78, Cys64/Cys83, and Cys68/Cys85.

It belongs to the long chain scorpion toxin family. Class 1 subfamily. Expressed by the venom gland.

The protein resides in the secreted. Functionally, inhibits voltage-gated potassium channel. In Olivierus martensii (Manchurian scorpion), this protein is Potassium channel toxin BmTXK-beta-2.